The sequence spans 65 residues: Large ribosomal subunit protein bL28 (65 aa).

The protein belongs to the bacterial ribosomal protein bL28 family.

This chain is Large ribosomal subunit protein bL28, found in Bifidobacterium animalis subsp. lactis (strain AD011).